Reading from the N-terminus, the 404-residue chain is Chorismate synthase (404 aa).

Arg40 and Arg46 together coordinate NADP(+). Residues 133–135 (RSS), 266–267 (QA), Gly313, 328–332 (KPIPT), and Arg354 contribute to the FMN site. Positions 283–320 (PGSQVHDPIEPREDGAQAYPRRTNHAGGTEGGTTTGMP) are disordered. The disordered stretch occupies residues 337–357 (LDSVDTATGEPEPTRYERSDI).

Belongs to the chorismate synthase family. As to quaternary structure, homotetramer. FMNH2 is required as a cofactor.

It carries out the reaction 5-O-(1-carboxyvinyl)-3-phosphoshikimate = chorismate + phosphate. The protein operates within metabolic intermediate biosynthesis; chorismate biosynthesis; chorismate from D-erythrose 4-phosphate and phosphoenolpyruvate: step 7/7. Functionally, catalyzes the anti-1,4-elimination of the C-3 phosphate and the C-6 proR hydrogen from 5-enolpyruvylshikimate-3-phosphate (EPSP) to yield chorismate, which is the branch point compound that serves as the starting substrate for the three terminal pathways of aromatic amino acid biosynthesis. This reaction introduces a second double bond into the aromatic ring system. The chain is Chorismate synthase from Salinibacter ruber (strain DSM 13855 / M31).